Consider the following 214-residue polypeptide: tRNA (guanine-N(7)-)-methyltransferase (214 aa).

Residues Glu-44, Glu-69, Asp-96, and Asp-118 each contribute to the S-adenosyl-L-methionine site. Asp-118 is a catalytic residue. Residues Lys-122, Asp-154, and 191-194 (TEYE) contribute to the substrate site.

This sequence belongs to the class I-like SAM-binding methyltransferase superfamily. TrmB family.

It carries out the reaction guanosine(46) in tRNA + S-adenosyl-L-methionine = N(7)-methylguanosine(46) in tRNA + S-adenosyl-L-homocysteine. The protein operates within tRNA modification; N(7)-methylguanine-tRNA biosynthesis. Catalyzes the formation of N(7)-methylguanine at position 46 (m7G46) in tRNA. This is tRNA (guanine-N(7)-)-methyltransferase from Listeria monocytogenes serotype 4a (strain HCC23).